A 452-amino-acid polypeptide reads, in one-letter code: Ribosomal protein uS12 methylthiotransferase RimO (452 aa).

The MTTase N-terminal domain occupies 3-122; it reads LTVGLISLGC…LPEIITQVMD (120 aa). The [4Fe-4S] cluster site is built by Cys12, Cys48, Cys85, Cys162, Cys166, and Cys169. Positions 148–392 constitute a Radical SAM core domain; it reads LTPPHTAYIK…TLLLARLASE (245 aa). In terms of domain architecture, TRAM spans 395-452; that stretch reads QEQIGRQIRVLVDAPGVARTEWDAPDIDGTVSVPLTLPVGQFATVTVTDAVAYELTAE.

It belongs to the methylthiotransferase family. RimO subfamily. The cofactor is [4Fe-4S] cluster.

It localises to the cytoplasm. The catalysed reaction is L-aspartate(89)-[ribosomal protein uS12]-hydrogen + (sulfur carrier)-SH + AH2 + 2 S-adenosyl-L-methionine = 3-methylsulfanyl-L-aspartate(89)-[ribosomal protein uS12]-hydrogen + (sulfur carrier)-H + 5'-deoxyadenosine + L-methionine + A + S-adenosyl-L-homocysteine + 2 H(+). In terms of biological role, catalyzes the methylthiolation of an aspartic acid residue of ribosomal protein uS12. This Akkermansia muciniphila (strain ATCC BAA-835 / DSM 22959 / JCM 33894 / BCRC 81048 / CCUG 64013 / CIP 107961 / Muc) protein is Ribosomal protein uS12 methylthiotransferase RimO.